Consider the following 180-residue polypeptide: Glycodelin (180 aa).

The signal sequence occupies residues 1–18 (MLCLLLTLGVALVCGVPA). N-linked (GlcNAc...) (complex) asparagine glycosylation is found at asparagine 46 and asparagine 81. Intrachain disulfides connect cysteine 84–cysteine 178 and cysteine 124–cysteine 137.

This sequence belongs to the calycin superfamily. Lipocalin family. Homodimer. In terms of processing, four distinct glycoforms A, C, F and S arise from different N-linked oligosaccharide chains at amino acid residues Asn-46 and Asn-81. Glycodelin-A and -F are taken up by the cumulus cells in which partial deglycosylation takes place to produce glycodelin-C. In terms of tissue distribution, this protein is, the main protein synthesized and secreted in the endometrium from mid-luteal phase of the menstrual cycle and during the first semester of pregnancy. Glycodelin-A is expressed in amniotic fluid, endometrium/decidua and maternal serum (at protein level). Glycodelin-F is expressed in follicular fluid, luteinized granulosa cells and the oviduct (at protein level). Glycodelin-S is expressed in seminal plasma and seminal vesicles (at protein level). Glycodelin-C is detected in cumulus cells (at protein level), but cumulus cells do not synthesize Glycodelin-C but take up and convert glycodelin-A and -F vis glycan remodeling.

The protein resides in the secreted. Glycoprotein that regulates critical steps during fertilization and also has immunomonomodulatory effects. Four glycoforms, namely glycodelin-S, -A, -F and -C have been identified in reproductive tissues that differ in glycosylation and biological activity. Glycodelin-A has contraceptive and immunosuppressive activities. Glycodelin-C stimulates binding of spermatozoa to the zona pellucida. Glycodelin-F inhibits spermatozoa-zona pellucida binding and significantly suppresses progesterone-induced acrosome reaction of spermatozoa. Glycodelin-S in seminal plasma maintains the uncapacitated state of human spermatozoa. The sequence is that of Glycodelin (PAEP) from Homo sapiens (Human).